The chain runs to 129 residues: Small ribosomal subunit protein uS8 (129 aa).

Belongs to the universal ribosomal protein uS8 family. As to quaternary structure, part of the 30S ribosomal subunit. Contacts proteins S5 and S12.

One of the primary rRNA binding proteins, it binds directly to 16S rRNA central domain where it helps coordinate assembly of the platform of the 30S subunit. The polypeptide is Small ribosomal subunit protein uS8 (Spiroplasma kunkelii).